The primary structure comprises 387 residues: F-box only protein 4 (387 aa).

Residues Ser-12 and Ser-48 each carry the phosphoserine modification. Residues 56–102 form the F-box domain; sequence ASTLTRLPIDVQLYILSFLSPHDLCQLGSTNHYWNETVRDPILWRYF.

As to quaternary structure, homodimer. Part of the SCF (SKP1-CUL1-F-box) E3 ubiquitin-protein ligase complex SCF(FBXO4) formed of CUL1, SKP1, RBX1 and FBXO4. Interacts with TERF1; this interaction is prevented in the presence of GNL3L. Identified in a complex with CRYAB and CCND1. In terms of processing, phosphorylation at Ser-12 varies during the cell cycle. It is low in resting cells and high in the S phase and the G2/M phase of the cell cycle. Phosphorylation is decreased during late G1 phase. Phosphorylation at Ser-12 promotes homodimerization and is necessary for optimal ubiquitin ligase activity towards CCND1.

The protein resides in the cytoplasm. It participates in protein modification; protein ubiquitination. Functionally, substrate recognition component of a SCF (SKP1-CUL1-F-box protein) E3 ubiquitin-protein ligase complex that mediates the ubiquitination and subsequent proteasomal degradation of target proteins. Promotes ubiquitination of cyclin-D1 (CCND1) and its subsequent proteasomal degradation. However, it does not act as a major regulator of CCND1 stability during the G1/S transition. Recognizes TERF1 and promotes its ubiquitination together with UBE2D1. Promotes ubiquitination of FXR1 following phosphorylation of FXR1 by GSK3B, leading to FXR1 degradation by the proteasome. The polypeptide is F-box only protein 4 (FBXO4) (Homo sapiens (Human)).